Consider the following 318-residue polypeptide: L-lactate dehydrogenase 1 (318 aa).

NAD(+)-binding positions include Val17, Asp38, Lys43, Tyr69, and 83 to 84 (GA). Substrate-binding positions include Gln86, Arg92, and 124 to 127 (NPVD). NAD(+)-binding positions include 122–124 (ATN) and Ser147. 152–155 (DTGR) lines the substrate pocket. Arg157 and His172 together coordinate beta-D-fructose 1,6-bisphosphate. His179 acts as the Proton acceptor in catalysis. Tyr224 carries the phosphotyrosine modification. Thr233 serves as a coordination point for substrate.

Belongs to the LDH/MDH superfamily. LDH family. In terms of assembly, homotetramer.

The protein localises to the cytoplasm. It catalyses the reaction (S)-lactate + NAD(+) = pyruvate + NADH + H(+). It functions in the pathway fermentation; pyruvate fermentation to lactate; (S)-lactate from pyruvate: step 1/1. Allosterically activated by fructose 1,6-bisphosphate (FBP). In terms of biological role, catalyzes the conversion of lactate to pyruvate. The protein is L-lactate dehydrogenase 1 of Peribacillus psychrosaccharolyticus (Bacillus psychrosaccharolyticus).